The sequence spans 239 residues: Ribonuclease 3 (239 aa).

Residues 12–137 (RAKLEGLIGH…LIAAIYLDGG (126 aa)) enclose the RNase III domain. Residue E50 participates in Mg(2+) binding. The active site involves D54. Positions 123 and 126 each coordinate Mg(2+). Residue E126 is part of the active site. Residues 162 to 231 (DAKTELQEWS…ATKMLEREGI (70 aa)) enclose the DRBM domain.

This sequence belongs to the ribonuclease III family. As to quaternary structure, homodimer. The cofactor is Mg(2+).

The protein resides in the cytoplasm. It carries out the reaction Endonucleolytic cleavage to 5'-phosphomonoester.. Digests double-stranded RNA. Involved in the processing of primary rRNA transcript to yield the immediate precursors to the large and small rRNAs (23S and 16S). Processes some mRNAs, and tRNAs when they are encoded in the rRNA operon. Processes pre-crRNA and tracrRNA of type II CRISPR loci if present in the organism. In Rhizobium leguminosarum bv. trifolii (strain WSM2304), this protein is Ribonuclease 3.